A 388-amino-acid chain; its full sequence is Succinate--CoA ligase [ADP-forming] subunit beta (388 aa).

Positions 9-243 (KQLFHRYGIP…ESQLAPLEVR (235 aa)) constitute an ATP-grasp domain. Residues K45, 52-54 (GRG), E98, V101, and E106 each bind ATP. Mg(2+) is bound by residues N198 and D212. Residues N263 and 320–322 (GIM) contribute to the substrate site.

The protein belongs to the succinate/malate CoA ligase beta subunit family. Heterotetramer of two alpha and two beta subunits. Mg(2+) is required as a cofactor.

The catalysed reaction is succinate + ATP + CoA = succinyl-CoA + ADP + phosphate. It carries out the reaction GTP + succinate + CoA = succinyl-CoA + GDP + phosphate. Its pathway is carbohydrate metabolism; tricarboxylic acid cycle; succinate from succinyl-CoA (ligase route): step 1/1. Its function is as follows. Succinyl-CoA synthetase functions in the citric acid cycle (TCA), coupling the hydrolysis of succinyl-CoA to the synthesis of either ATP or GTP and thus represents the only step of substrate-level phosphorylation in the TCA. The beta subunit provides nucleotide specificity of the enzyme and binds the substrate succinate, while the binding sites for coenzyme A and phosphate are found in the alpha subunit. The protein is Succinate--CoA ligase [ADP-forming] subunit beta of Syntrophotalea carbinolica (strain DSM 2380 / NBRC 103641 / GraBd1) (Pelobacter carbinolicus).